The primary structure comprises 90 residues: DNA-binding protein HU-beta (90 aa).

Belongs to the bacterial histone-like protein family. In terms of assembly, heterodimer of an alpha and a beta chain.

Histone-like DNA-binding protein which is capable of wrapping DNA to stabilize it, and thus to prevent its denaturation under extreme environmental conditions. The polypeptide is DNA-binding protein HU-beta (hupB) (Pseudomonas aeruginosa (strain ATCC 15692 / DSM 22644 / CIP 104116 / JCM 14847 / LMG 12228 / 1C / PRS 101 / PAO1)).